Reading from the N-terminus, the 464-residue chain is MSTAALVEGKIVQCIGAVIDVEFPRESMPKIYDALILEGSELTLEVQQQLGDGVVRTICLGASDGLRRGVVVKNTGNPISVPVGKPTLGRIMDVLGRPIDEAGPIESENKRSIHQKAPAFDELSPSTELLETGIKVIDLICPFAKGGKVGLFGGAGVGKTVNMMELINNIAKEHGGYSVFAGVGERTREGNDFYHEMKDSNVLDKVALVYGQMNEPPGNRLRVALTGLTMAEHFRDEGLDVLFFVDNIYRFTLAGTEVSALLGRMPSAVGYQPTLAEEMGKLQERITSTKKGSITSVQAVYVPADDLTDPSPATTFGHLDATVVLSRDIASLGIYPAVDPLDSTSRQIDPNVIGEEHYSITRRVQQTLQRYKELRDIIAILGMDELSPEDKLSVARARKIQRFLSQPFHVAEVFTGSPGKYVPLKETIRGFKMIVDGECDHLPEQAFYMVGTIDEAFEKAKKIQ.

153–160 (GGAGVGKT) provides a ligand contact to ATP.

This sequence belongs to the ATPase alpha/beta chains family. In terms of assembly, F-type ATPases have 2 components, CF(1) - the catalytic core - and CF(0) - the membrane proton channel. CF(1) has five subunits: alpha(3), beta(3), gamma(1), delta(1), epsilon(1). CF(0) has three main subunits: a(1), b(2) and c(9-12). The alpha and beta chains form an alternating ring which encloses part of the gamma chain. CF(1) is attached to CF(0) by a central stalk formed by the gamma and epsilon chains, while a peripheral stalk is formed by the delta and b chains.

Its subcellular location is the cell inner membrane. It catalyses the reaction ATP + H2O + 4 H(+)(in) = ADP + phosphate + 5 H(+)(out). Produces ATP from ADP in the presence of a proton gradient across the membrane. The catalytic sites are hosted primarily by the beta subunits. In Burkholderia mallei (strain SAVP1), this protein is ATP synthase subunit beta 1.